The following is a 129-amino-acid chain: uncharacterized protein (129 aa).

The span at 84–98 (QKTVSKKYKSRKGRR) shows a compositional bias: basic residues. Residues 84–129 (QKTVSKKYKSRKGRRYTRERNISSEKNKTDKSHKVRVGKIQNINND) form a disordered region. A compositionally biased stretch (basic and acidic residues) spans 99-115 (YTRERNISSEKNKTDKS).

This is an uncharacterized protein from Acanthamoeba polyphaga mimivirus (APMV).